Consider the following 320-residue polypeptide: ATP-dependent 6-phosphofructokinase (320 aa).

Residue Gly-12 coordinates ATP. 22-26 (RSVIR) is an ADP binding site. ATP contacts are provided by residues 73-74 (RF) and 103-106 (GDGS). Asp-104 lines the Mg(2+) pocket. Substrate is bound at residue 126–128 (TID). Catalysis depends on Asp-128, which acts as the Proton acceptor. Arg-155 provides a ligand contact to ADP. Substrate is bound by residues Arg-163 and 170-172 (MGR). ADP-binding positions include 186-188 (GAE) and 214-216 (KRH). Residues Glu-223, Arg-244, and 250 to 253 (HIQR) each bind substrate.

This sequence belongs to the phosphofructokinase type A (PFKA) family. ATP-dependent PFK group I subfamily. Prokaryotic clade 'B1' sub-subfamily. As to quaternary structure, homotetramer. Requires Mg(2+) as cofactor.

It localises to the cytoplasm. It carries out the reaction beta-D-fructose 6-phosphate + ATP = beta-D-fructose 1,6-bisphosphate + ADP + H(+). The protein operates within carbohydrate degradation; glycolysis; D-glyceraldehyde 3-phosphate and glycerone phosphate from D-glucose: step 3/4. Allosterically activated by ADP and other diphosphonucleosides, and allosterically inhibited by phosphoenolpyruvate. In terms of biological role, catalyzes the phosphorylation of D-fructose 6-phosphate to fructose 1,6-bisphosphate by ATP, the first committing step of glycolysis. In Tolumonas auensis (strain DSM 9187 / NBRC 110442 / TA 4), this protein is ATP-dependent 6-phosphofructokinase.